The following is a 139-amino-acid chain: Actin-depolymerizing factor 3 (139 aa).

One can recognise an ADF-H domain in the interval 7 to 139 (GVAVNDECML…SLDEIKDRAR (133 aa)).

It belongs to the actin-binding proteins ADF family. In terms of tissue distribution, expressed in all tissues except pollen.

Its subcellular location is the cytoplasm. Its function is as follows. Actin-depolymerizing protein. Severs actin filaments (F-actin) and binds to actin monomers. The chain is Actin-depolymerizing factor 3 (ADF3) from Zea mays (Maize).